The chain runs to 233 residues: 3,4-dihydroxy-2-butanone 4-phosphate synthase (233 aa).

Position 37 (E37) interacts with Mg(2+). E37 lines the Mn(2+) pocket. D41 lines the D-ribulose 5-phosphate pocket. S-glutathionyl cysteine is present on C66. D-ribulose 5-phosphate contacts are provided by residues T92 and 150–154 (RRGHT). Position 153 (H153) interacts with Mg(2+). Residue H153 participates in Mn(2+) binding.

As to quaternary structure, homodimer. Requires Mg(2+) as cofactor. It depends on Mn(2+) as a cofactor. Post-translationally, S-glutathionylation is reversible and dependent on a glutaredoxin.

The enzyme catalyses D-ribulose 5-phosphate = (2S)-2-hydroxy-3-oxobutyl phosphate + formate + H(+). It functions in the pathway cofactor biosynthesis; riboflavin biosynthesis; 2-hydroxy-3-oxobutyl phosphate from D-ribulose 5-phosphate: step 1/1. Functionally, catalyzes the conversion of D-ribulose 5-phosphate to formate and 3,4-dihydroxy-2-butanone 4-phosphate. This chain is 3,4-dihydroxy-2-butanone 4-phosphate synthase (RIB3), found in Pyricularia oryzae (strain 70-15 / ATCC MYA-4617 / FGSC 8958) (Rice blast fungus).